Reading from the N-terminus, the 100-residue chain is Probable DNA-binding protein HU (100 aa).

It belongs to the bacterial histone-like protein family.

Its function is as follows. Histone-like DNA-binding protein which is capable of wrapping DNA to stabilize it, and thus to prevent its denaturation under extreme environmental conditions. The sequence is that of Probable DNA-binding protein HU (hup) from Chlamydia pneumoniae (Chlamydophila pneumoniae).